A 264-amino-acid chain; its full sequence is Thymidylate synthase (264 aa).

A dUMP-binding site is contributed by R21. Position 51 (H51) interacts with (6R)-5,10-methylene-5,6,7,8-tetrahydrofolate. Residue R126–R127 coordinates dUMP. C146 serves as the catalytic Nucleophile. Residues R166–D169, N177, and H207–Y209 contribute to the dUMP site. D169 is a binding site for (6R)-5,10-methylene-5,6,7,8-tetrahydrofolate. A263 contacts (6R)-5,10-methylene-5,6,7,8-tetrahydrofolate.

This sequence belongs to the thymidylate synthase family. Bacterial-type ThyA subfamily. As to quaternary structure, homodimer.

The protein resides in the cytoplasm. The enzyme catalyses dUMP + (6R)-5,10-methylene-5,6,7,8-tetrahydrofolate = 7,8-dihydrofolate + dTMP. The protein operates within pyrimidine metabolism; dTTP biosynthesis. Functionally, catalyzes the reductive methylation of 2'-deoxyuridine-5'-monophosphate (dUMP) to 2'-deoxythymidine-5'-monophosphate (dTMP) while utilizing 5,10-methylenetetrahydrofolate (mTHF) as the methyl donor and reductant in the reaction, yielding dihydrofolate (DHF) as a by-product. This enzymatic reaction provides an intracellular de novo source of dTMP, an essential precursor for DNA biosynthesis. In Enterobacter sp. (strain 638), this protein is Thymidylate synthase.